A 143-amino-acid chain; its full sequence is Large ribosomal subunit protein uL11 (143 aa).

It belongs to the universal ribosomal protein uL11 family. As to quaternary structure, part of the ribosomal stalk of the 50S ribosomal subunit. Interacts with L10 and the large rRNA to form the base of the stalk. L10 forms an elongated spine to which L12 dimers bind in a sequential fashion forming a multimeric L10(L12)X complex. Post-translationally, one or more lysine residues are methylated.

Forms part of the ribosomal stalk which helps the ribosome interact with GTP-bound translation factors. This Polynucleobacter asymbioticus (strain DSM 18221 / CIP 109841 / QLW-P1DMWA-1) (Polynucleobacter necessarius subsp. asymbioticus) protein is Large ribosomal subunit protein uL11.